The following is a 95-amino-acid chain: Citrate lyase acyl carrier protein (95 aa).

Ser14 is modified (O-(phosphoribosyl dephospho-coenzyme A)serine).

This sequence belongs to the CitD family. As to quaternary structure, oligomer with a subunit composition of (alpha,beta,gamma)6.

Its subcellular location is the cytoplasm. Functionally, covalent carrier of the coenzyme of citrate lyase. This chain is Citrate lyase acyl carrier protein, found in Haemophilus influenzae (strain ATCC 51907 / DSM 11121 / KW20 / Rd).